Consider the following 72-residue polypeptide: Translation initiation factor IF-1 (72 aa).

The S1-like domain occupies 1 to 72; that stretch reads MSDKSIKMQA…SNGRITYRHK (72 aa).

Belongs to the IF-1 family. As to quaternary structure, component of the 30S ribosomal translation pre-initiation complex which assembles on the 30S ribosome in the order IF-2 and IF-3, IF-1 and N-formylmethionyl-tRNA(fMet); mRNA recruitment can occur at any time during PIC assembly.

The protein localises to the cytoplasm. In terms of biological role, one of the essential components for the initiation of protein synthesis. Stabilizes the binding of IF-2 and IF-3 on the 30S subunit to which N-formylmethionyl-tRNA(fMet) subsequently binds. Helps modulate mRNA selection, yielding the 30S pre-initiation complex (PIC). Upon addition of the 50S ribosomal subunit IF-1, IF-2 and IF-3 are released leaving the mature 70S translation initiation complex. This Mycoplasmopsis pulmonis (strain UAB CTIP) (Mycoplasma pulmonis) protein is Translation initiation factor IF-1.